Reading from the N-terminus, the 436-residue chain is MNNIIPIMSLLFKQLYSRQGKKDAIRIAAGLVILAVFEIGLIRQAGIDESVLRKTYIILALLLMNTYMVFLSVTSQWKESYMKLSCLLPISSRSFWLAQSVVLFVDTCLRRTLFFFILPLFLFGNGTLSGAQTLFWLGRFSFFTVYSIIFGVVLSNHFVKKKNLMFLLHAAIFACVCISAALMPAATIPLCAVHILWAVVIDFPVFLQAPPQQGKMHSFMRRSEFSFYKREWNRFISSKAMLLNYAVMAVFSGFFSFQMMNTGIFNQQVIYIVISALLLICSPIALLYSIEKNDRMLLITLPIKRKTMFWAKYRFYSGLLAGGFLLVVMIVGFISGRSISVLTFLQCIELLLAGAYIRLTADEKRPSFSWQTEQQLWSGFSKYRSYLFCLPLFLAILAGTAVSLAVIPIAGLVIVYYLQKQDGGFFDTSKRERLGS.

10 helical membrane-spanning segments follow: residues 27 to 47 (IAAG…QAGI), 55 to 75 (TYII…SVTS), 113 to 133 (LFFF…GAQT), 134 to 154 (LFWL…GVVL), 164 to 184 (LMFL…ALMP), 187 to 207 (TIPL…PVFL), 240 to 260 (AMLL…FQMM), 270 to 290 (IYIV…LYSI), 315 to 335 (FYSG…GFIS), and 395 to 415 (AILA…LVIV).

The protein resides in the cell membrane. In terms of biological role, involved in the production of the bacteriocin subtilosin. Required for immunity to subtilosin. The sequence is that of Antilisterial bacteriocin subtilosin biosynthesis protein AlbD (albD) from Bacillus subtilis (strain 168).